Reading from the N-terminus, the 78-residue chain is Large ribosomal subunit protein bL31 (78 aa).

This sequence belongs to the bacterial ribosomal protein bL31 family. Type A subfamily. As to quaternary structure, part of the 50S ribosomal subunit.

Functionally, binds the 23S rRNA. In Rickettsia typhi (strain ATCC VR-144 / Wilmington), this protein is Large ribosomal subunit protein bL31 (rpmE).